Reading from the N-terminus, the 86-residue chain is RNA-binding protein Hfq (86 aa).

The region spanning 9–68 (DPYLNTLRKEKVGVSIYLVNGIKLQGTIESFDQFVILLKNTVSQMVYKHAISTVVPVRPI) is the Sm domain.

Belongs to the Hfq family. In terms of assembly, homohexamer.

Functionally, RNA chaperone that binds small regulatory RNA (sRNAs) and mRNAs to facilitate mRNA translational regulation in response to envelope stress, environmental stress and changes in metabolite concentrations. Also binds with high specificity to tRNAs. The polypeptide is RNA-binding protein Hfq (Pseudomonas fluorescens (strain Pf0-1)).